Reading from the N-terminus, the 368-residue chain is uncharacterized protein (368 aa).

The protein belongs to the CdaR family.

This is an uncharacterized protein from Bacillus subtilis (strain 168).